Consider the following 232-residue polypeptide: Aquaporin Z (232 aa).

Transmembrane regions (helical) follow at residues 8–28 and 33–53; these read AFGT…AAGF and IGLL…AFAI. Positions 62 to 64 match the NPA 1 motif; the sequence is NPA. A run of 3 helical transmembrane segments spans residues 84 to 104, 130 to 150, and 159 to 179; these read IIAQ…IATG, MLAA…VIMG, and GFAP…SIPV. The NPA 2 motif lies at 185–187; that stretch reads NPA. A helical transmembrane segment spans residues 201 to 221; that stretch reads VSQLWLFWVAPIVGGVLGAVI.

This sequence belongs to the MIP/aquaporin (TC 1.A.8) family. In terms of assembly, homotetramer.

Its subcellular location is the cell inner membrane. It catalyses the reaction H2O(in) = H2O(out). Its function is as follows. Channel that permits osmotically driven movement of water in both directions. It is involved in the osmoregulation and in the maintenance of cell turgor during volume expansion in rapidly growing cells. It mediates rapid entry or exit of water in response to abrupt changes in osmolarity. The chain is Aquaporin Z from Vibrio parahaemolyticus serotype O3:K6 (strain RIMD 2210633).